A 955-amino-acid polypeptide reads, in one-letter code: Leucine--tRNA ligase (955 aa).

Positions 51 to 61 (PYLNGVLHAGH) match the 'HIGH' region motif. The 'KMSKS' region motif lies at 647-651 (KLSKS). Lysine 650 lines the ATP pocket.

The protein belongs to the class-I aminoacyl-tRNA synthetase family.

It is found in the cytoplasm. The catalysed reaction is tRNA(Leu) + L-leucine + ATP = L-leucyl-tRNA(Leu) + AMP + diphosphate. This chain is Leucine--tRNA ligase, found in Methanococcus maripaludis (strain C5 / ATCC BAA-1333).